We begin with the raw amino-acid sequence, 761 residues long: Probable beta-galactosidase 2 (761 aa).

Positions 1-23 are cleaved as a signal peptide; it reads MGTIKNNFQLLWLILLIVVLVNG. Residues N39 and N110 are each glycosylated (N-linked (GlcNAc...) asparagine). The Proton donor role is filled by E195. N-linked (GlcNAc...) asparagine glycosylation is present at N206. The Nucleophile role is filled by E267. N385, N405, N438, N501, N552, N553, N577, N592, N642, N690, and N696 each carry an N-linked (GlcNAc...) asparagine glycan.

It belongs to the glycosyl hydrolase 35 family.

The catalysed reaction is Hydrolysis of terminal non-reducing beta-D-galactose residues in beta-D-galactosides.. Cleaves beta-linked terminal galactosyl residues from gangliosides, glycoproteins, and glycosaminoglycans. The chain is Probable beta-galactosidase 2 (glb2) from Dictyostelium discoideum (Social amoeba).